Here is a 150-residue protein sequence, read N- to C-terminus: Putative pre-16S rRNA nuclease (150 aa).

It belongs to the YqgF nuclease family.

It is found in the cytoplasm. Could be a nuclease involved in processing of the 5'-end of pre-16S rRNA. This chain is Putative pre-16S rRNA nuclease, found in Chlamydia felis (strain Fe/C-56) (Chlamydophila felis).